Reading from the N-terminus, the 375-residue chain is Trichodiene synthase (375 aa).

The protein belongs to the trichodiene synthase family.

It carries out the reaction (2E,6E)-farnesyl diphosphate = trichodiene + diphosphate. It functions in the pathway sesquiterpene biosynthesis; trichothecene biosynthesis. In terms of biological role, TS is a member of the terpene cyclase group of enzymes. It catalyzes the isomerization and cyclization of farnesyl pyro-phosphate to form trichodiene, the first cyclic intermediate in the biosynthetic pathway for trichothecenes. It serves to branch trichothecene biosynthesis from the isoprenoid pathway. The polypeptide is Trichodiene synthase (TRI5) (Fusarium culmorum).